Here is a 305-residue protein sequence, read N- to C-terminus: Homoserine O-acetyltransferase (305 aa).

Cys142 serves as the catalytic Acyl-thioester intermediate. Substrate-binding residues include Lys163 and Ser192. Residue His235 is the Proton acceptor of the active site. The active site involves Glu237. Arg249 is a substrate binding site.

Belongs to the MetA family.

It is found in the cytoplasm. The catalysed reaction is L-homoserine + acetyl-CoA = O-acetyl-L-homoserine + CoA. Its pathway is amino-acid biosynthesis; L-methionine biosynthesis via de novo pathway; O-acetyl-L-homoserine from L-homoserine: step 1/1. Its function is as follows. Transfers an acetyl group from acetyl-CoA to L-homoserine, forming acetyl-L-homoserine. This chain is Homoserine O-acetyltransferase, found in Roseobacter denitrificans (strain ATCC 33942 / OCh 114) (Erythrobacter sp. (strain OCh 114)).